Here is a 326-residue protein sequence, read N- to C-terminus: Type II methyltransferase M.CviAII (326 aa).

This sequence belongs to the N(4)/N(6)-methyltransferase family.

It carries out the reaction a 2'-deoxyadenosine in DNA + S-adenosyl-L-methionine = an N(6)-methyl-2'-deoxyadenosine in DNA + S-adenosyl-L-homocysteine + H(+). An alpha subtype methylase that recognizes the double-stranded sequence 5'-CATG-3', methylates A-2 on both strands and protects the DNA from cleavage by the CviAII endonuclease. This chain is Type II methyltransferase M.CviAII (CVIAIIM), found in Paramecium bursaria Chlorella virus 1 (PBCV-1).